Reading from the N-terminus, the 523-residue chain is MGRGSKMIDLEALPHLPGCYLFKDEEGIVLYVGKAKDLKKRVSSYFQKRDHDPKTASLMQFARGLDFIVTNTEVEAFLLENTLIKKHWPRYNIMLKDSKRYACIHLTGEKFPRIRIARKNTGEGEFFGPFVSARERDYIFEVVRKTFQLRTCRKMPSRACLRYHIGACSGPCISSVSVEEYGEKVKKAISVLKGNIRELIESMETEMKEMAAKQMFEQAMELRDEIAALEYLQEKQNMERQKKYDEDILNYIVRDNNVYLMLFKVYKGTLEDKQDFVFAFGEDFLEEFLVQYYSENDPPEELIVPEPLDESLVEFLAHVKGKKVKVAVPKQGDKKELLDLVLKNVEIGFFGDRKKLEALQSKLSLPKIPNVIECFDISHLSGTATVGSMVQFRGGRPDKHNYRRFKIESVEGIDDFASIAEVVRRRYSRLLEDKHEMPDLIIIDGGKGQLSSAFQELRKLRVKVPIISIAKREEEIYVPGLKSPLPIKKDEKASLFVQEIRDEAHRFAINYNRLLRQKALIQK.

The GIY-YIG domain occupies 15–93 (HLPGCYLFKD…IKKHWPRYNI (79 aa)). The UVR domain occupies 197 to 232 (RELIESMETEMKEMAAKQMFEQAMELRDEIAALEYL).

This sequence belongs to the UvrC family. Interacts with UvrB in an incision complex.

The protein localises to the cytoplasm. The UvrABC repair system catalyzes the recognition and processing of DNA lesions. UvrC both incises the 5' and 3' sides of the lesion. The N-terminal half is responsible for the 3' incision and the C-terminal half is responsible for the 5' incision. This chain is UvrABC system protein C, found in Methanosarcina mazei (strain ATCC BAA-159 / DSM 3647 / Goe1 / Go1 / JCM 11833 / OCM 88) (Methanosarcina frisia).